The sequence spans 491 residues: NADH-ubiquinone oxidoreductase chain 2 (491 aa).

Helical transmembrane passes span 11 to 31 (MIKYSIYILPLIILIVLSISI), 38 to 58 (VHIIIQSLKLTLIVIMIVIGI), 74 to 94 (ELIKLFEYLLLGVSYMIIKMF), 106 to 126 (ITDEGLILIYSSIIGMLISME), 129 to 149 (NLITLFLSLEISSICFYILAL), 161 to 181 (LKYYIIGGIATTILLLGIVSI), 210 to 230 (IALIVLGLILKLGIAPFHGWL), 238 to 258 (GMLMTFYLTITQKLVTLMVLI), 270 to 290 (AIMFTNGLIILILVTLVVGTI), 298 to 318 (LIRFIAYSAIVNSALLILMLA), 330 to 350 (VYYLINYIIGLTVLMSLIMGF), 375 to 395 (GAIVYILVLMYLAGLPPMTNF), 411 to 433 (VYLTMLAFFLSVGVMIYYMNLVK), and 463 to 483 (IVLGVMWLIFSQLYLDEILNV).

Belongs to the complex I subunit 2 family.

Its subcellular location is the mitochondrion inner membrane. The enzyme catalyses a ubiquinone + NADH + 5 H(+)(in) = a ubiquinol + NAD(+) + 4 H(+)(out). Functionally, core subunit of the mitochondrial membrane respiratory chain NADH dehydrogenase (Complex I) that is believed to belong to the minimal assembly required for catalysis. Complex I functions in the transfer of electrons from NADH to the respiratory chain. The immediate electron acceptor for the enzyme is believed to be ubiquinone. This is NADH-ubiquinone oxidoreductase chain 2 (nad2) from Dictyostelium citrinum (Slime mold).